The following is a 378-amino-acid chain: Putative glutamate--cysteine ligase 2 (378 aa).

The protein belongs to the glutamate--cysteine ligase type 2 family. YbdK subfamily.

It catalyses the reaction L-cysteine + L-glutamate + ATP = gamma-L-glutamyl-L-cysteine + ADP + phosphate + H(+). Functionally, ATP-dependent carboxylate-amine ligase which exhibits weak glutamate--cysteine ligase activity. The polypeptide is Putative glutamate--cysteine ligase 2 (Jannaschia sp. (strain CCS1)).